We begin with the raw amino-acid sequence, 256 residues long: Cell division protein ZipA (256 aa).

At 1–6 the chain is on the periplasmic side; that stretch reads MQYGRQ. The helical transmembrane segment at 7–27 threads the bilayer; sequence ILICIGILTVIILLLYGLLNS. The Cytoplasmic segment spans residues 28 to 256; sequence YWDRTVTFCK…RHVLSANKST (229 aa).

The protein belongs to the ZipA family. Interacts with FtsZ via their C-terminal domains.

It is found in the cell inner membrane. Essential cell division protein that stabilizes the FtsZ protofilaments by cross-linking them and that serves as a cytoplasmic membrane anchor for the Z ring. Also required for the recruitment to the septal ring of downstream cell division proteins. The protein is Cell division protein ZipA of Baumannia cicadellinicola subsp. Homalodisca coagulata.